Consider the following 411-residue polypeptide: MSLQAIKFDRQKTRLDILDQLLIPYQTKYIQVSNIDDGYSVIQKMQVRGAPAIAIVGSFSITCELNSVKDGQKNNHGYDVSDLSVFKAALEKRIDYLIKSRPTAVNLVNACTAIKAIVETACTIDDLYAEVLRYSVVLFEDDLKNNYRIGANGVRYIDNELSNFEGPFAVMTICNTGSLATSGHGTALGIIRSLWAKSKANPRNADDKTIQGQKSWLSHVYACETRPYNQGSRLTSYELNFEKIPFSLITDNMPAYLIDSLFSQRVNCPLPSRAPVKFIIVGADRIVTNGDLANKIGTFQLALIASQYDGVKFIGAAPTTTIDYTRDSGDDIVIEQRPANELTSILGGQVDSSDQFVTDSEGKVNLLRIKTATPNIDVWNPAFDVTPNRLIDSIVTEQDYLVKDSHGKFNL.

Residue aspartate 284 is the Proton donor of the active site.

It belongs to the eIF-2B alpha/beta/delta subunits family. MtnA subfamily.

The protein localises to the cytoplasm. It localises to the nucleus. The catalysed reaction is 5-(methylsulfanyl)-alpha-D-ribose 1-phosphate = 5-(methylsulfanyl)-D-ribulose 1-phosphate. The protein operates within amino-acid biosynthesis; L-methionine biosynthesis via salvage pathway; L-methionine from S-methyl-5-thio-alpha-D-ribose 1-phosphate: step 1/6. Functionally, catalyzes the interconversion of methylthioribose-1-phosphate (MTR-1-P) into methylthioribulose-1-phosphate (MTRu-1-P). This is Methylthioribose-1-phosphate isomerase from Komagataella phaffii (strain GS115 / ATCC 20864) (Yeast).